Consider the following 86-residue polypeptide: RNA-binding protein Hfq (86 aa).

Residues 9-68 (DPYLNTLRKEKVPVSIYLVNGIKLQGSIESFDQFVVLLKNTVSQMVYKHAISTVVPARPV) form the Sm domain. Residues 66-86 (RPVRLPSPTDSEHGDSEPGNA) form a disordered region. A compositionally biased stretch (basic and acidic residues) spans 75-86 (DSEHGDSEPGNA).

Belongs to the Hfq family. In terms of assembly, homohexamer.

Functionally, RNA chaperone that binds small regulatory RNA (sRNAs) and mRNAs to facilitate mRNA translational regulation in response to envelope stress, environmental stress and changes in metabolite concentrations. Also binds with high specificity to tRNAs. The polypeptide is RNA-binding protein Hfq (Pseudomonas putida (strain ATCC 700007 / DSM 6899 / JCM 31910 / BCRC 17059 / LMG 24140 / F1)).